The chain runs to 278 residues: Tetraspanin-13 (278 aa).

The Cytoplasmic portion of the chain corresponds to 1–25; that stretch reads MARDKEDQNNENPSIVQNMSFPFNT. A helical membrane pass occupies residues 26–46; sequence IFLISSAIFLVTAAFWFVAVM. Topologically, residues 47-62 are extracellular; it reads TLHYRTDECNRFVTTP. Residues 63 to 83 form a helical membrane-spanning segment; sequence GIFISFSLLAMSLTGFYAAYF. Over 84-92 the chain is Cytoplasmic; sequence KSDCLFRIH. Residues 93–113 traverse the membrane as a helical segment; sequence FFIFFLWMFVVVSKAIFVIFL. Topologically, residues 114–249 are extracellular; it reads HKETNPRLFP…DVHNTSFSIT (136 aa). 3 N-linked (GlcNAc...) asparagine glycosylation sites follow: Asn-202, Asn-220, and Asn-243. Residues 250–270 traverse the membrane as a helical segment; it reads VNIIHIIFSLCIGMTGWFAWL. The Cytoplasmic segment spans residues 271–278; it reads RILRESQK.

It belongs to the tetraspanin (TM4SF) family.

Its subcellular location is the membrane. May be involved in the regulation of cell differentiation. This Arabidopsis thaliana (Mouse-ear cress) protein is Tetraspanin-13 (TET13).